The sequence spans 288 residues: Acetyl-coenzyme A carboxylase carboxyl transferase subunit beta (288 aa).

Residues 34 to 288 enclose the CoA carboxyltransferase N-terminal domain; the sequence is LFAKCPACKH…HLVAFHGGVS (255 aa). Zn(2+)-binding residues include Cys38, Cys41, Cys56, and Cys59. The segment at 38-59 adopts a C4-type zinc-finger fold; the sequence is CPACKHMIYQKDLGPAKICPTC.

It belongs to the AccD/PCCB family. In terms of assembly, acetyl-CoA carboxylase is a heterohexamer composed of biotin carboxyl carrier protein (AccB), biotin carboxylase (AccC) and two subunits each of ACCase subunit alpha (AccA) and ACCase subunit beta (AccD). Zn(2+) is required as a cofactor.

It localises to the cytoplasm. It catalyses the reaction N(6)-carboxybiotinyl-L-lysyl-[protein] + acetyl-CoA = N(6)-biotinyl-L-lysyl-[protein] + malonyl-CoA. Its pathway is lipid metabolism; malonyl-CoA biosynthesis; malonyl-CoA from acetyl-CoA: step 1/1. In terms of biological role, component of the acetyl coenzyme A carboxylase (ACC) complex. Biotin carboxylase (BC) catalyzes the carboxylation of biotin on its carrier protein (BCCP) and then the CO(2) group is transferred by the transcarboxylase to acetyl-CoA to form malonyl-CoA. This is Acetyl-coenzyme A carboxylase carboxyl transferase subunit beta from Streptococcus equi subsp. zooepidemicus (strain H70).